Consider the following 386-residue polypeptide: MHIHEYQAKTLFRCRDIQIPKGILIDNTTKINDVCKALGGDVWVVKAQIHAGGRGKGGGVIFCHSIEKVERVCNQLLGSKLITPQTDAKGLPVGQLLIEAKQNIERELYLSLLIDRQTHKITVLSSTKGGMDIEKVASKTPDKIIKFGIDPLGSLSVQDCTFLAKKLGFNTELTKQFNNTLLSLYEIFTQKDVNLIEINPLIITQENKLLALDGKIDFDDNALYRHKDIAKLRDISQEDEKERLASEYQLNYILFDGNIGCMVNGAGLAMATMDLIEHFGGSPANFLDVGGGTTADRVAKAFELIQTETNVKSILVNIFGGIVHCDLIAQGILQAIKTVGLTLPIVVRLEGTNAPEGLNLLNKSKFNIHVESDLTKAAIKIVKLTK.

Residues Lys46, 53 to 55 (GRG), Glu99, Gln102, and Glu107 each bind ATP. The Mg(2+) site is built by Asn199 and Asp213. Substrate is bound by residues Asn264 and 321-323 (GIV).

This sequence belongs to the succinate/malate CoA ligase beta subunit family. Heterotetramer of two alpha and two beta subunits. Requires Mg(2+) as cofactor.

The enzyme catalyses succinate + ATP + CoA = succinyl-CoA + ADP + phosphate. It carries out the reaction GTP + succinate + CoA = succinyl-CoA + GDP + phosphate. It functions in the pathway carbohydrate metabolism; tricarboxylic acid cycle; succinate from succinyl-CoA (ligase route): step 1/1. Its function is as follows. Succinyl-CoA synthetase functions in the citric acid cycle (TCA), coupling the hydrolysis of succinyl-CoA to the synthesis of either ATP or GTP and thus represents the only step of substrate-level phosphorylation in the TCA. The beta subunit provides nucleotide specificity of the enzyme and binds the substrate succinate, while the binding sites for coenzyme A and phosphate are found in the alpha subunit. In Ruthia magnifica subsp. Calyptogena magnifica, this protein is Succinate--CoA ligase [ADP-forming] subunit beta.